We begin with the raw amino-acid sequence, 235 residues long: NADH-quinone oxidoreductase subunit C (235 aa).

This sequence belongs to the complex I 30 kDa subunit family. As to quaternary structure, NDH-1 is composed of 14 different subunits. Subunits NuoB, C, D, E, F, and G constitute the peripheral sector of the complex.

The protein resides in the cell membrane. It catalyses the reaction a quinone + NADH + 5 H(+)(in) = a quinol + NAD(+) + 4 H(+)(out). Its function is as follows. NDH-1 shuttles electrons from NADH, via FMN and iron-sulfur (Fe-S) centers, to quinones in the respiratory chain. The immediate electron acceptor for the enzyme in this species is believed to be a menaquinone. Couples the redox reaction to proton translocation (for every two electrons transferred, four hydrogen ions are translocated across the cytoplasmic membrane), and thus conserves the redox energy in a proton gradient. This chain is NADH-quinone oxidoreductase subunit C, found in Mycobacterium avium (strain 104).